A 370-amino-acid chain; its full sequence is NADH-quinone oxidoreductase subunit D (370 aa).

This sequence belongs to the complex I 49 kDa subunit family. NDH-1 is composed of 14 different subunits. Subunits NuoB, C, D, E, F, and G constitute the peripheral sector of the complex.

The protein resides in the cell membrane. It catalyses the reaction a quinone + NADH + 5 H(+)(in) = a quinol + NAD(+) + 4 H(+)(out). Functionally, NDH-1 shuttles electrons from NADH, via FMN and iron-sulfur (Fe-S) centers, to quinones in the respiratory chain. The immediate electron acceptor for the enzyme in this species is believed to be a menaquinone. Couples the redox reaction to proton translocation (for every two electrons transferred, four hydrogen ions are translocated across the cytoplasmic membrane), and thus conserves the redox energy in a proton gradient. This is NADH-quinone oxidoreductase subunit D from Clostridium beijerinckii (strain ATCC 51743 / NCIMB 8052) (Clostridium acetobutylicum).